The following is a 923-amino-acid chain: Transportin-3 (923 aa).

An N-acetylmethionine modification is found at Met1. The residue at position 74 (Ser74) is a Phosphoserine. Thr896 bears the Phosphothreonine mark.

In terms of assembly, interacts with (GTP-bound) Ran. Interacts with (phosphorylated) SFRS1 and SFRS2; leading to their nuclear import. Interacts with NUP62. Interacts with RBM4. Interacts with CPSF6, promoting its nuclear import. As to quaternary structure, (Microbial infection) Interacts with the HIV-1 pre-integration complex (PIC), which is composed of viral genome, matrix protein, Vpr and integrase. Interacts with HIV-1 integrase protein; the interaction is direct. As to expression, expressed in skeletal muscle.

Its subcellular location is the nucleus envelope. The protein localises to the cytoplasm. Functionally, importin, which transports target proteins into the nucleus. Specifically mediates the nuclear import of splicing factor serine/arginine (SR) proteins, such as RBM4, SFRS1 and SFRS2, by recognizing phosphorylated SR domains. Also mediates the nuclear import of serine/arginine (SR) protein CPSF6, independently of CPSF6 phosphorylation. The nuclear import process is regulated by the small GTPase Ran that partitions between cytoplasm and nucleus in the predominantly GDP- and GTP-bound form, respectively. Importin associates with target cargo proteins in the cytoplasm, and the competitive binding of GTP-bound Ran induces the release of cargos in the nucleus. In terms of biological role, (Microbial infection) Involved in immunodeficiency virus (HIV-1) infection by importing the pre-integration complex (PIC) into the nucleus. Required for a nuclear maturation step of HIV-1 prior to integration. The protein is Transportin-3 of Homo sapiens (Human).